Consider the following 150-residue polypeptide: Transthyretin (150 aa).

A signal peptide spans 1 to 20 (MASYRLLLLCLAGLVFVSEA). Cysteine 30 is modified (sulfocysteine). Lysine 35 is an L-thyroxine binding site. Glutamate 62 carries the post-translational modification 4-carboxyglutamate. L-thyroxine is bound at residue glutamate 74. A glycan (N-linked (GlcNAc...) asparagine) is linked at asparagine 118. Serine 137 lines the L-thyroxine pocket.

It belongs to the transthyretin family. In terms of assembly, homotetramer. Dimer of dimers. In the homotetramer, subunits assemble around a central channel that can accommodate two ligand molecules. Interacts with RBP4. Post-translationally, sulfonation of the reactive cysteine Cys-30 enhances the stability of the native conformation of TTR, avoiding misassembly of the protein leading to amyloid formation. As to expression, detected in plasma and cerebrospinal fluid (at protein level). Highly expressed in the choroid plexus. Detected in liver.

The protein localises to the secreted. Functionally, thyroid hormone-binding protein. Probably transports thyroxine from the bloodstream to the brain. This chain is Transthyretin (TTR), found in Sus scrofa (Pig).